A 301-amino-acid polypeptide reads, in one-letter code: Homoserine O-acetyltransferase (301 aa).

Cys142 acts as the Acyl-thioester intermediate in catalysis. Lys163 and Ser192 together coordinate substrate. His235 acts as the Proton acceptor in catalysis. The active site involves Glu237. Residue Arg249 coordinates substrate.

Belongs to the MetA family.

The protein resides in the cytoplasm. It carries out the reaction L-homoserine + acetyl-CoA = O-acetyl-L-homoserine + CoA. The protein operates within amino-acid biosynthesis; L-methionine biosynthesis via de novo pathway; O-acetyl-L-homoserine from L-homoserine: step 1/1. Functionally, transfers an acetyl group from acetyl-CoA to L-homoserine, forming acetyl-L-homoserine. This chain is Homoserine O-acetyltransferase, found in Bacillus cereus (strain ATCC 14579 / DSM 31 / CCUG 7414 / JCM 2152 / NBRC 15305 / NCIMB 9373 / NCTC 2599 / NRRL B-3711).